The following is a 112-amino-acid chain: Nitrogen regulatory protein P-II (112 aa).

Position 51 is an O-UMP-tyrosine (tyrosine 51).

Belongs to the P(II) protein family. In terms of assembly, homotrimer.

In terms of biological role, in nitrogen-limiting conditions, when the ratio of Gln to 2-ketoglutarate decreases, P-II is uridylylated to P-II-UMP. P-II-UMP allows the deadenylation of glutamine synthetase (GS), thus activating the enzyme. Conversely, in nitrogen excess P-II is deuridylated and promotes the adenylation of GS. P-II indirectly controls the transcription of the GS gene (glnA). P-II prevents NR-II-catalyzed conversion of NR-I to NR-I-phosphate, the transcriptional activator of glnA. When P-II is uridylylated to P-II-UMP, these events are reversed. This is Nitrogen regulatory protein P-II (glnB) from Mesorhizobium japonicum (strain LMG 29417 / CECT 9101 / MAFF 303099) (Mesorhizobium loti (strain MAFF 303099)).